We begin with the raw amino-acid sequence, 404 residues long: Probable tRNA sulfurtransferase (404 aa).

In terms of domain architecture, THUMP spans 61-166 (EAVSERLKDV…SGYSYIMCDE (106 aa)). Residues 184-185 (LL), 209-210 (HF), Arg-266, Gly-288, and Gln-297 each bind ATP.

The protein belongs to the ThiI family.

Its subcellular location is the cytoplasm. The catalysed reaction is [ThiI sulfur-carrier protein]-S-sulfanyl-L-cysteine + a uridine in tRNA + 2 reduced [2Fe-2S]-[ferredoxin] + ATP + H(+) = [ThiI sulfur-carrier protein]-L-cysteine + a 4-thiouridine in tRNA + 2 oxidized [2Fe-2S]-[ferredoxin] + AMP + diphosphate. It catalyses the reaction [ThiS sulfur-carrier protein]-C-terminal Gly-Gly-AMP + S-sulfanyl-L-cysteinyl-[cysteine desulfurase] + AH2 = [ThiS sulfur-carrier protein]-C-terminal-Gly-aminoethanethioate + L-cysteinyl-[cysteine desulfurase] + A + AMP + 2 H(+). Its pathway is cofactor biosynthesis; thiamine diphosphate biosynthesis. Catalyzes the ATP-dependent transfer of a sulfur to tRNA to produce 4-thiouridine in position 8 of tRNAs, which functions as a near-UV photosensor. Also catalyzes the transfer of sulfur to the sulfur carrier protein ThiS, forming ThiS-thiocarboxylate. This is a step in the synthesis of thiazole, in the thiamine biosynthesis pathway. The sulfur is donated as persulfide by IscS. This chain is Probable tRNA sulfurtransferase, found in Bacillus cereus (strain ZK / E33L).